Reading from the N-terminus, the 133-residue chain is uncharacterized protein (133 aa).

A helical transmembrane segment spans residues 91-113 (LFATALISCIPSSFSALSFLATL).

It is found in the membrane. This is an uncharacterized protein from Saccharomyces cerevisiae (strain ATCC 204508 / S288c) (Baker's yeast).